The following is a 697-amino-acid chain: Elongation factor G (697 aa).

Positions 8–283 (ERCRNIGIMA…AVVDYLPSPL (276 aa)) constitute a tr-type G domain. Residues 17–24 (AHIDAGKT), 81–85 (DTPGH), and 135–138 (NKID) contribute to the GTP site.

This sequence belongs to the TRAFAC class translation factor GTPase superfamily. Classic translation factor GTPase family. EF-G/EF-2 subfamily.

It localises to the cytoplasm. In terms of biological role, catalyzes the GTP-dependent ribosomal translocation step during translation elongation. During this step, the ribosome changes from the pre-translocational (PRE) to the post-translocational (POST) state as the newly formed A-site-bound peptidyl-tRNA and P-site-bound deacylated tRNA move to the P and E sites, respectively. Catalyzes the coordinated movement of the two tRNA molecules, the mRNA and conformational changes in the ribosome. The protein is Elongation factor G of Koribacter versatilis (strain Ellin345).